A 200-amino-acid chain; its full sequence is MAFKYAIALSGGIATGKSTVASLLSLNGMRVIDADAISHDILDASSLWVRENFGDEFVDGVSVNRSKLGTLIFSDNIAKKKLESFLHPKIRAEIEQRSIKQDSFMFPYLIDIPLFFESGAYDIKESVVVYVPKELQLERFIKRNGFSREESLRRIESQMDIEEKKKRATWVIDNSGDLKHLQRECEEFVEKIKAKYLEKK.

The DPCK domain maps to 6–200; the sequence is AIALSGGIAT…KIKAKYLEKK (195 aa). 14–19 contributes to the ATP binding site; it reads ATGKST.

This sequence belongs to the CoaE family.

It is found in the cytoplasm. It carries out the reaction 3'-dephospho-CoA + ATP = ADP + CoA + H(+). It functions in the pathway cofactor biosynthesis; coenzyme A biosynthesis; CoA from (R)-pantothenate: step 5/5. In terms of biological role, catalyzes the phosphorylation of the 3'-hydroxyl group of dephosphocoenzyme A to form coenzyme A. This Sulfurimonas denitrificans (strain ATCC 33889 / DSM 1251) (Thiomicrospira denitrificans (strain ATCC 33889 / DSM 1251)) protein is Dephospho-CoA kinase.